Here is a 510-residue protein sequence, read N- to C-terminus: Chromosomal replication initiator protein DnaA (510 aa).

Residues 1 to 74 (MHTDLWERGC…EATLSELAGK (74 aa)) are domain I, interacts with DnaA modulators. Residues 74 to 173 (KPVRLELSLL…PTLSPAVSRG (100 aa)) are domain II. The interval 125 to 168 (ARHDPQSVVPTPGGSANGRAAPRVGEPGGPVGTSTLPVAPTLSP) is disordered. A domain III, AAA+ region region spans residues 174–390 (RLNPALTFDT…GALRKVLAYS (217 aa)). ATP contacts are provided by glycine 218, glycine 220, lysine 221, and threonine 222. Residues 391–510 (RFSHKEISIN…LHVLEQTLKG (120 aa)) form a domain IV, binds dsDNA region.

The protein belongs to the DnaA family. As to quaternary structure, oligomerizes as a right-handed, spiral filament on DNA at oriC.

It localises to the cytoplasm. In terms of biological role, plays an essential role in the initiation and regulation of chromosomal replication. ATP-DnaA binds to the origin of replication (oriC) to initiate formation of the DNA replication initiation complex once per cell cycle. Binds the DnaA box (a 9 base pair repeat at the origin) and separates the double-stranded (ds)DNA. Forms a right-handed helical filament on oriC DNA; dsDNA binds to the exterior of the filament while single-stranded (ss)DNA is stabiized in the filament's interior. The ATP-DnaA-oriC complex binds and stabilizes one strand of the AT-rich DNA unwinding element (DUE), permitting loading of DNA polymerase. After initiation quickly degrades to an ADP-DnaA complex that is not apt for DNA replication. Binds acidic phospholipids. The protein is Chromosomal replication initiator protein DnaA of Leptothrix cholodnii (strain ATCC 51168 / LMG 8142 / SP-6) (Leptothrix discophora (strain SP-6)).